The chain runs to 99 residues: C-C motif chemokine 17 (99 aa).

The signal sequence occupies residues 1–23 (MMSLKLLLLVMLLLGASLQVTHA). 2 cysteine pairs are disulfide-bonded: C33–C57 and C34–C73.

Belongs to the intercrine beta (chemokine CC) family. As to expression, expressed in thymus and also in spleen, lung, lymph node, kidney, small intestine, colon and skin.

It localises to the secreted. Chemokine, which displays chemotactic activity for T lymphocytes, preferentially Th2 cells, but not monocytes or granulocytes. Therefore plays an important role in a wide range of inflammatory and immunological processes. Acts by binding to CCR4 at T-cell surface. Mediates GM-CSF/CSF2-driven pain and inflammation. In the brain, required to maintain the typical, highly branched morphology of hippocampal microglia under homeostatic conditions. May be important for the appropriate adaptation of microglial morphology and synaptic plasticity to acute lipopolysaccharide (LPS)-induced neuroinflammation. Plays a role in wound healing, mainly by inducing fibroblast migration into the wound. The protein is C-C motif chemokine 17 (CCL17) of Felis catus (Cat).